Here is a 153-residue protein sequence, read N- to C-terminus: Histone H2B.4 (153 aa).

Composition is skewed to basic and acidic residues over residues 1-10 (MAPKKDEKPA) and 20-54 (AKAE…GEKK). Residues 1–60 (MAPKKDEKPATAEAGAEAPAKAEAKPKAEKAAKKAKKEPSKKAAKEPKGDGEKKDKKKKK) form a disordered region. An N6-acetyllysine mark is found at Lys-41 and Lys-42. Residue Lys-149 forms a Glycyl lysine isopeptide (Lys-Gly) (interchain with G-Cter in ubiquitin) linkage.

This sequence belongs to the histone H2B family. The nucleosome is a histone octamer containing two molecules each of H2A, H2B, H3 and H4 assembled in one H3-H4 heterotetramer and two H2A-H2B heterodimers. The octamer wraps approximately 147 bp of DNA. Post-translationally, the N-terminus is blocked. In terms of processing, can be acetylated to form H2BK33ac and H2BK34ac. Acetylated mainly on the ubiquitinated form. Monoubiquitinated to form H2BK143ub1; which is increased during the light period and may give a specific tag for epigenetic transcriptional activation.

The protein resides in the nucleus. It localises to the chromosome. Functionally, core component of nucleosome. Nucleosomes wrap and compact DNA into chromatin, limiting DNA accessibility to the cellular machineries which require DNA as a template. Histones thereby play a central role in transcription regulation, DNA repair, DNA replication and chromosomal stability. DNA accessibility is regulated via a complex set of post-translational modifications of histones, also called histone code, and nucleosome remodeling. The sequence is that of Histone H2B.4 from Chlamydomonas reinhardtii (Chlamydomonas smithii).